The sequence spans 89 residues: Small ribosomal subunit protein bS20 (89 aa).

Polar residues predominate over residues 1–11; that stretch reads MANIKSQIKRN. Positions 1-22 are disordered; that stretch reads MANIKSQIKRNLTNEKRRLRNK.

The protein belongs to the bacterial ribosomal protein bS20 family.

Its function is as follows. Binds directly to 16S ribosomal RNA. The protein is Small ribosomal subunit protein bS20 of Frankia casuarinae (strain DSM 45818 / CECT 9043 / HFP020203 / CcI3).